We begin with the raw amino-acid sequence, 94 residues long: Large ribosomal subunit protein bL27 (94 aa).

The tract at residues 1-25 (MAHKKGTGSTRNGRDSQSKRLGVKR) is disordered.

This sequence belongs to the bacterial ribosomal protein bL27 family.

The polypeptide is Large ribosomal subunit protein bL27 (Gloeothece citriformis (strain PCC 7424) (Cyanothece sp. (strain PCC 7424))).